Consider the following 529-residue polypeptide: UDP-glucuronosyltransferase 2B11 (529 aa).

The signal sequence occupies residues 1-21 (MTLKWTSVLLLIHLSCYFSSG). An N6-succinyllysine modification is found at Lys-135. A glycan (N-linked (GlcNAc...) asparagine) is linked at Asn-315. A helical transmembrane segment spans residues 493–513 (VIGFLLACVATVIFIITKFCL).

Belongs to the UDP-glycosyltransferase family. As to expression, widely expressed.

It localises to the microsome membrane. The protein localises to the endoplasmic reticulum membrane. The enzyme catalyses glucuronate acceptor + UDP-alpha-D-glucuronate = acceptor beta-D-glucuronoside + UDP + H(+). Its function is as follows. UDPGT is of major importance in the conjugation and subsequent elimination of potentially toxic xenobiotics and endogenous compounds. In Homo sapiens (Human), this protein is UDP-glucuronosyltransferase 2B11 (UGT2B11).